A 361-amino-acid polypeptide reads, in one-letter code: Histidine biosynthesis bifunctional protein HisB (361 aa).

The histidinol-phosphatase stretch occupies residues 1-172 (MTQPTLFIDR…PKTTACKRPP (172 aa)). Asp-9 functions as the Nucleophile in the catalytic mechanism. Mg(2+) is bound by residues Asp-9 and Asp-11. Catalysis depends on Asp-11, which acts as the Proton donor. The Zn(2+) site is built by Cys-92, His-94, Cys-100, and Cys-102. Position 129 (Asp-129) interacts with Mg(2+). The segment at 173–361 (RYAEVVRTTK…NELPSSKGVL (189 aa)) is imidazoleglycerol-phosphate dehydratase.

It in the N-terminal section; belongs to the histidinol-phosphatase family. In the C-terminal section; belongs to the imidazoleglycerol-phosphate dehydratase family. It depends on Mg(2+) as a cofactor. Zn(2+) is required as a cofactor.

It localises to the cytoplasm. The catalysed reaction is D-erythro-1-(imidazol-4-yl)glycerol 3-phosphate = 3-(imidazol-4-yl)-2-oxopropyl phosphate + H2O. The enzyme catalyses L-histidinol phosphate + H2O = L-histidinol + phosphate. Its pathway is amino-acid biosynthesis; L-histidine biosynthesis; L-histidine from 5-phospho-alpha-D-ribose 1-diphosphate: step 6/9. It participates in amino-acid biosynthesis; L-histidine biosynthesis; L-histidine from 5-phospho-alpha-D-ribose 1-diphosphate: step 8/9. In Actinobacillus pleuropneumoniae serotype 3 (strain JL03), this protein is Histidine biosynthesis bifunctional protein HisB.